Here is a 7839-residue protein sequence, read N- to C-terminus: Nonribosomal peptide synthetase GRA1 (7839 aa).

A compositionally biased stretch (polar residues) spans 1 to 23 (MALLNGKSTLPNGHNSSIESPNG). The tract at residues 1–26 (MALLNGKSTLPNGHNSSIESPNGYTE) is disordered. Positions 264 to 650 (LASPNSCAVH…LGRIDDQVKI (387 aa)) are adenylation 1. The Carrier 1 domain maps to 793–866 (SAEALVLRQL…LQAEMSEKKK (74 aa)). Serine 827 carries the O-(pantetheine 4'-phosphoryl)serine modification. Residues 916–1332 (DIYPASPLQE…ILSPSDVAQI (417 aa)) are condensation 1. The segment at 1351 to 1742 (FFTQVKRSPD…QRKDAQLKIR (392 aa)) is adenylation 2. Residues 1880–1957 (ELETEAERTM…AMSRQATVSD (78 aa)) form the Carrier 2 domain. Serine 1918 carries the post-translational modification O-(pantetheine 4'-phosphoryl)serine. Residues 1997–2413 (DLYPCTPFQE…LISPSDMETI (417 aa)) are condensation 2. The segment at 2432–2828 (FDRRLSQKHS…GRRDTQLKIR (397 aa)) is adenylation 3. In terms of domain architecture, Carrier 3 spans 2963–3040 (IPTTQMEWNL…DLAQAIVLDT (78 aa)). Serine 3001 bears the O-(pantetheine 4'-phosphoryl)serine mark. The condensation 3 stretch occupies residues 3084–3496 (DIYPCTPLQD…QVDLISDSDH (413 aa)). The segment at 3520–3923 (RLAVSNPDAE…GRRDSQVKLR (404 aa)) is adenylation 4. Positions 4057–4134 (RPLTEREKDL…DMAAMTTSLS (78 aa)) constitute a Carrier 4 domain. Position 4095 is an O-(pantetheine 4'-phosphoryl)serine (serine 4095). The tract at residues 4234 to 4569 (NLEEFVGRQS…MMNPDDAEEI (336 aa)) is condensation 4. Residues 4591–4982 (HSKGCPDRIA…VSRKDTQVKF (392 aa)) are adenylation 5. One can recognise a Carrier 5 domain in the interval 5113–5189 (ALSSDEESQL…DMALCMTSAQ (77 aa)). Serine 5150 bears the O-(pantetheine 4'-phosphoryl)serine mark. The condensation 5 stretch occupies residues 5224–5653 (EDIYPCSALQ…VSPSDQAEIL (430 aa)). The adenylation 6 stretch occupies residues 5671 to 6069 (FESRARLQPS…GRRDTQVKLR (399 aa)). The Carrier 6 domain occupies 6207-6282 (FPSSLAEQQM…HMAAIATTFT (76 aa)). Serine 6243 is subject to O-(pantetheine 4'-phosphoryl)serine. Positions 6321 to 6730 (QDIYPCSALQ…RLADMDLTGP (410 aa)) are condensation 6. Positions 6756 to 7147 (EQRVKSQPDS…LGRKDSQIKL (392 aa)) are adenylation 7. One can recognise a Carrier 7 domain in the interval 7290-7366 (KAATPNEKTL…DLARVSRQSI (77 aa)). Position 7327 is an O-(pantetheine 4'-phosphoryl)serine (serine 7327). The condensation7 stretch occupies residues 7404–7704 (HDIYPCTQVQ…LDYAKKRASS (301 aa)).

It belongs to the NRP synthetase family.

It functions in the pathway mycotoxin biosynthesis. In terms of biological role, nonribosomal peptide synthetase; part of the gene cluster that mediates the biosynthesis of gramillins A and B, bicyclic lipopeptides that induce cell death in maize leaves but not in wheat leaves. The nonribosomal peptide synthetase GRA1 incorporates respectively a glutamic adic (Glu), a leucine (Leu), a serine (Ser), a hydroxyglutamine (HOGln), a 2-amino decanoic acid, and 2 cysteins (CysB and CysA). The biosynthesis of 2-amino decanoic acid incorporated in gramillins could be initiated by a fatty acid synthase composed of the alpha and beta subunits FGSG_00036 and FGSG_11656. The cytochrome P450 monooxygenase FGSG_15680 could hydroxylate the fatty acid chain. Subsequent oxidation to the ketone by the oxidoreductase FGSG_00048 and transamination by aminotransferase FGSG_00049 could form 2-amino-decanoic acid. On the other hand, FGSG_15680 could also be responsible for the HO-modified glutamine at the gamma-position. Whether hydroxylation occurs on the fully assembled product or on the Gln residue prior to assembly into the gramillins requires further proof. The thioredoxin FGSG_00043 could also be required for the disulfide-bond formation between CysA and CysB. The specific involvement of the remaining proteins from the cluster is more difficult to discern, but could have broader regulatory (FGSG_00040 and FGSG_11657) or enzymatic functions (FGSG_00044 and FGSG_00045). The final C-domain of GRA1 does not possess the expected sequence of a termination CT domain, often implicated in macrocyclization and release of a cyclopeptidein fungal NRPs; and the thioesterase FGSG_00047 may act in concert with the terminal C-domain of GRA1 to catalyze the formation of the macrocyclic anhydride and release of the products. The polypeptide is Nonribosomal peptide synthetase GRA1 (Gibberella zeae (strain ATCC MYA-4620 / CBS 123657 / FGSC 9075 / NRRL 31084 / PH-1) (Wheat head blight fungus)).